A 334-amino-acid chain; its full sequence is GTPase Obg (334 aa).

Residues 1–159 (MRFVDEVVIK…KEVRLELNLL (159 aa)) enclose the Obg domain. Residues 160–331 (ADVALLGLPN…LAKKLNEFLQ (172 aa)) enclose the OBG-type G domain. GTP contacts are provided by residues 166–173 (GLPNAGKS), 191–195 (FTTMY), 212–215 (DIPG), 282–285 (NKID), and 312–314 (SAA). Residues serine 173 and threonine 193 each contribute to the Mg(2+) site.

This sequence belongs to the TRAFAC class OBG-HflX-like GTPase superfamily. OBG GTPase family. Monomer. Requires Mg(2+) as cofactor.

The protein resides in the cytoplasm. In terms of biological role, an essential GTPase which binds GTP, GDP and possibly (p)ppGpp with moderate affinity, with high nucleotide exchange rates and a fairly low GTP hydrolysis rate. Plays a role in control of the cell cycle, stress response, ribosome biogenesis and in those bacteria that undergo differentiation, in morphogenesis control. The polypeptide is GTPase Obg (Francisella tularensis subsp. tularensis (strain FSC 198)).